The primary structure comprises 263 residues: Phosphonoacetaldehyde hydrolase (263 aa).

Asp10 serves as the catalytic Nucleophile. 2 residues coordinate Mg(2+): Asp10 and Ala12. Lys51 acts as the Schiff-base intermediate with substrate in catalysis. Asp184 serves as a coordination point for Mg(2+).

Belongs to the HAD-like hydrolase superfamily. PhnX family. As to quaternary structure, homodimer. It depends on Mg(2+) as a cofactor.

The catalysed reaction is phosphonoacetaldehyde + H2O = acetaldehyde + phosphate + H(+). Its function is as follows. Involved in phosphonate degradation. In Bacteroides fragilis (strain ATCC 25285 / DSM 2151 / CCUG 4856 / JCM 11019 / LMG 10263 / NCTC 9343 / Onslow / VPI 2553 / EN-2), this protein is Phosphonoacetaldehyde hydrolase.